The chain runs to 536 residues: Membrane protein insertase YidC (536 aa).

5 helical membrane passes run 7 to 27 (FFIF…QSQS), 338 to 358 (LLST…LITF), 419 to 439 (LPVF…IGSV), 453 to 473 (LSDQ…MFFI), and 494 to 514 (PFIF…YYIV).

Belongs to the OXA1/ALB3/YidC family. Type 1 subfamily. Interacts with the Sec translocase complex via SecD. Specifically interacts with transmembrane segments of nascent integral membrane proteins during membrane integration.

It is found in the cell membrane. Required for the insertion and/or proper folding and/or complex formation of integral membrane proteins into the membrane. Involved in integration of membrane proteins that insert both dependently and independently of the Sec translocase complex, as well as at least some lipoproteins. Aids folding of multispanning membrane proteins. The protein is Membrane protein insertase YidC of Buchnera aphidicola subsp. Schizaphis graminum (strain Sg).